Consider the following 64-residue polypeptide: uncharacterized protein (64 aa).

The tract at residues 1-64 is disordered; it reads MNNPNIVPPH…QNQPPQRPQY (64 aa). Residues 8–32 show a composition bias toward low complexity; the sequence is PPHFNQHQQQNHNQNQPPHHMNNPN.

This is an uncharacterized protein from Dictyostelium discoideum (Social amoeba).